The chain runs to 287 residues: Probable phosphite transport system-binding protein PtxB (287 aa).

The N-terminal stretch at 1 to 23 (MKRLSALLLTCLLSAVSSLSALA) is a signal peptide.

Belongs to the phosphate/phosphite/phosphonate binding protein family.

Probably forms part of a binding-protein-dependent phosphite transporter. Required for oxidation of phosphite to phosphate. This Stutzerimonas stutzeri (Pseudomonas stutzeri) protein is Probable phosphite transport system-binding protein PtxB (ptxB).